A 2517-amino-acid chain; its full sequence is Non-reducing polyketide synthase pkbA (2517 aa).

The interval 59 to 250 (LERVAGPAEK…KRFDLRGRFH (192 aa)) is N-terminal acylcarrier protein transacylase domain (SAT). Positions 380–775 (SEPIAIIGMG…SANTVSSLKE (396 aa)) constitute a Ketosynthase family 3 (KS3) domain. Active-site for beta-ketoacyl synthase activity residues include cysteine 547, histidine 682, and histidine 721. The interval 849–1158 (AFGGQVARSV…TGTAALADAT (310 aa)) is malonyl-CoA:ACP transacylase (MAT) domain. The active-site For acyl/malonyl transferase activity is serine 935. Residues 1221 to 1353 (EEFLTFVKYK…GTVVLRENDT (133 aa)) are N-terminal hotdog fold. One can recognise a PKS/mFAS DH domain in the interval 1221–1530 (EEFLTFVKYK…FTRVQISSLG (310 aa)). The tract at residues 1251-1525 (FVKGHAVLAE…ILGAHFTRVQ (275 aa)) is product template (PT) domain. The active-site Proton acceptor; for dehydratase activity is the histidine 1255. The segment at 1379-1530 (DCHILQGPVV…FTRVQISSLG (152 aa)) is C-terminal hotdog fold. The Proton donor; for dehydratase activity role is filled by aspartate 1437. A Carrier 1 domain is found at 1574-1651 (RPTLEISEKL…SISKCLASYL (78 aa)). Serine 1611 is subject to O-(pantetheine 4'-phosphoryl)serine. A disordered region spans residues 1659 to 1684 (QPEDLADADSVESDSDMPTGAVTSGI). Acidic residues predominate over residues 1662–1673 (DLADADSVESDS). In terms of domain architecture, Carrier 2 spans 1685–1761 (TTPDDAVSRL…DLIALVPALN (77 aa)). An O-(pantetheine 4'-phosphoryl)serine modification is found at serine 1721. Residues 1976 to 2075 (LELGGGTGGT…IHRMLRPDGF (100 aa)) form a methyltransferase (CMeT) domain region. The interval 2200–2514 (LMIHGGGHIM…RGYDFLKEEV (315 aa)) is thioesterase (TE) domain.

The cofactor is pantetheine 4'-phosphate.

The enzyme catalyses 3 malonyl-CoA + acetyl-CoA + S-adenosyl-L-methionine + H(+) = 3-methylorsellinate + S-adenosyl-L-homocysteine + 3 CO2 + 4 CoA. It functions in the pathway phytotoxin biosynthesis. In terms of biological role, non-reducing polyketide synthase; part of the gene cluster that mediates the biosynthesis of cichorine, a phytotoxin active against knapweed, corn, and soybeans. The first step in the pathway is performed by the non-reducing polyketide synthase pkbA that condenses one acetyl-CoA starter unit with 3 malonyl-CoA units. PkbA also catalyzes one methylation step to produce 3-methylorsellinate. The nonribosomal peptide synthase-like protein cicB, the cytochrome P450 monooxygenase cicH and the O-methyltransferase cicE are involved in the conversion of 3-methylorsellinate into nidulol. CicB converts 3-methylorsellinate to a yet unidentified intermediate, cicH may play a ring-closing role for cichorine and cicE is plausibly responsible for the methylation of one of the phenol groups. The oxidoreductase cicC acts downstream with still unidentified enzymes to further convert nidulol into cichorin. This Emericella nidulans (strain FGSC A4 / ATCC 38163 / CBS 112.46 / NRRL 194 / M139) (Aspergillus nidulans) protein is Non-reducing polyketide synthase pkbA.